The primary structure comprises 234 residues: Thiamine-phosphate synthase (234 aa).

4-amino-2-methyl-5-(diphosphooxymethyl)pyrimidine-binding positions include 65 to 69 and asparagine 97; that span reads QYRNK. 2 residues coordinate Mg(2+): aspartate 98 and aspartate 117. Serine 136 serves as a coordination point for 4-amino-2-methyl-5-(diphosphooxymethyl)pyrimidine. Residue 163-165 coordinates 2-[(2R,5Z)-2-carboxy-4-methylthiazol-5(2H)-ylidene]ethyl phosphate; the sequence is SHT. Position 166 (lysine 166) interacts with 4-amino-2-methyl-5-(diphosphooxymethyl)pyrimidine. Residues glycine 192 and 212 to 213 each bind 2-[(2R,5Z)-2-carboxy-4-methylthiazol-5(2H)-ylidene]ethyl phosphate; that span reads IS.

The protein belongs to the thiamine-phosphate synthase family. Mg(2+) is required as a cofactor.

It catalyses the reaction 2-[(2R,5Z)-2-carboxy-4-methylthiazol-5(2H)-ylidene]ethyl phosphate + 4-amino-2-methyl-5-(diphosphooxymethyl)pyrimidine + 2 H(+) = thiamine phosphate + CO2 + diphosphate. It carries out the reaction 2-(2-carboxy-4-methylthiazol-5-yl)ethyl phosphate + 4-amino-2-methyl-5-(diphosphooxymethyl)pyrimidine + 2 H(+) = thiamine phosphate + CO2 + diphosphate. The catalysed reaction is 4-methyl-5-(2-phosphooxyethyl)-thiazole + 4-amino-2-methyl-5-(diphosphooxymethyl)pyrimidine + H(+) = thiamine phosphate + diphosphate. It functions in the pathway cofactor biosynthesis; thiamine diphosphate biosynthesis; thiamine phosphate from 4-amino-2-methyl-5-diphosphomethylpyrimidine and 4-methyl-5-(2-phosphoethyl)-thiazole: step 1/1. Functionally, condenses 4-methyl-5-(beta-hydroxyethyl)thiazole monophosphate (THZ-P) and 2-methyl-4-amino-5-hydroxymethyl pyrimidine pyrophosphate (HMP-PP) to form thiamine monophosphate (TMP). This chain is Thiamine-phosphate synthase, found in Xylella fastidiosa (strain Temecula1 / ATCC 700964).